The primary structure comprises 485 residues: Cysteine--tRNA ligase (485 aa).

Position 27 (Cys-27) interacts with Zn(2+). The 'HIGH' region signature appears at 29–39; it reads ITAYDFSHIGH. Residues Cys-208, His-233, and Glu-237 each contribute to the Zn(2+) site. The short motif at 265–269 is the 'KMSKS' region element; the sequence is KMSKS. ATP is bound at residue Lys-268.

This sequence belongs to the class-I aminoacyl-tRNA synthetase family. In terms of assembly, monomer. It depends on Zn(2+) as a cofactor.

Its subcellular location is the cytoplasm. The catalysed reaction is tRNA(Cys) + L-cysteine + ATP = L-cysteinyl-tRNA(Cys) + AMP + diphosphate. In Lawsonia intracellularis (strain PHE/MN1-00), this protein is Cysteine--tRNA ligase.